Consider the following 266-residue polypeptide: tRNA pseudouridine synthase A (266 aa).

Asp57 (nucleophile) is an active-site residue. Tyr115 serves as a coordination point for substrate.

Belongs to the tRNA pseudouridine synthase TruA family. Homodimer.

It catalyses the reaction uridine(38/39/40) in tRNA = pseudouridine(38/39/40) in tRNA. In terms of biological role, formation of pseudouridine at positions 38, 39 and 40 in the anticodon stem and loop of transfer RNAs. This Buchnera aphidicola subsp. Acyrthosiphon pisum (strain Tuc7) protein is tRNA pseudouridine synthase A.